Reading from the N-terminus, the 95-residue chain is uncharacterized protein (95 aa).

Residues 60 to 89 adopt a coiled-coil conformation; that stretch reads VKNMINRIVEELDKRIDEIKEGLNELEKSG.

This is an uncharacterized protein from Sulfolobus islandicus filamentous virus (isolate Iceland/Hveragerdi) (SIFV).